The chain runs to 229 residues: Ribonuclease 3 (229 aa).

Residues 5 to 127 (LSRLERQLGY…LIGAIYLDAG (123 aa)) enclose the RNase III domain. Mg(2+) is bound at residue E40. The active site involves D44. Positions 113 and 116 each coordinate Mg(2+). E116 is a catalytic residue. In terms of domain architecture, DRBM spans 154–224 (DPKTRLQEFL…AAAALIALGV (71 aa)).

The protein belongs to the ribonuclease III family. As to quaternary structure, homodimer. It depends on Mg(2+) as a cofactor.

The protein resides in the cytoplasm. The enzyme catalyses Endonucleolytic cleavage to 5'-phosphomonoester.. Its function is as follows. Digests double-stranded RNA. Involved in the processing of primary rRNA transcript to yield the immediate precursors to the large and small rRNAs (23S and 16S). Processes some mRNAs, and tRNAs when they are encoded in the rRNA operon. Processes pre-crRNA and tracrRNA of type II CRISPR loci if present in the organism. This chain is Ribonuclease 3, found in Pseudomonas syringae pv. tomato (strain ATCC BAA-871 / DC3000).